A 368-amino-acid chain; its full sequence is 3-dehydroquinate synthase (368 aa).

NAD(+) is bound by residues 71 to 76 (DGESFK), 105 to 109 (GVIGD), 129 to 130 (TT), Lys-142, Lys-151, and 169 to 172 (TLRT). 3 residues coordinate Zn(2+): Glu-184, His-247, and His-264.

It belongs to the sugar phosphate cyclases superfamily. Dehydroquinate synthase family. Co(2+) serves as cofactor. Requires Zn(2+) as cofactor. The cofactor is NAD(+).

It is found in the cytoplasm. The catalysed reaction is 7-phospho-2-dehydro-3-deoxy-D-arabino-heptonate = 3-dehydroquinate + phosphate. Its pathway is metabolic intermediate biosynthesis; chorismate biosynthesis; chorismate from D-erythrose 4-phosphate and phosphoenolpyruvate: step 2/7. Functionally, catalyzes the conversion of 3-deoxy-D-arabino-heptulosonate 7-phosphate (DAHP) to dehydroquinate (DHQ). The chain is 3-dehydroquinate synthase from Ralstonia pickettii (strain 12J).